Consider the following 192-residue polypeptide: Molybdenum cofactor guanylyltransferase (192 aa).

Positions 21, 67, and 101 each coordinate GTP. Asp-101 serves as a coordination point for Mg(2+).

This sequence belongs to the MobA family. In terms of assembly, monomer. Requires Mg(2+) as cofactor.

The protein resides in the cytoplasm. It catalyses the reaction Mo-molybdopterin + GTP + H(+) = Mo-molybdopterin guanine dinucleotide + diphosphate. In terms of biological role, transfers a GMP moiety from GTP to Mo-molybdopterin (Mo-MPT) cofactor (Moco or molybdenum cofactor) to form Mo-molybdopterin guanine dinucleotide (Mo-MGD) cofactor. The protein is Molybdenum cofactor guanylyltransferase of Neisseria meningitidis serogroup C / serotype 2a (strain ATCC 700532 / DSM 15464 / FAM18).